The chain runs to 96 residues: Invertase 7 (96 aa).

A signal peptide spans 1–19; it reads MLLQAFIFLLAGFAAKISA. N23 carries N-linked (GlcNAc...) asparagine glycosylation. Substrate is bound by residues 39–42 and Q60; that span reads WMND. The active site involves D42. Residues N64 and N76 are each glycosylated (N-linked (GlcNAc...) asparagine).

The protein belongs to the glycosyl hydrolase 32 family.

It carries out the reaction Hydrolysis of terminal non-reducing beta-D-fructofuranoside residues in beta-D-fructofuranosides.. The protein is Invertase 7 (SUC7) of Saccharomyces cerevisiae (Baker's yeast).